A 166-amino-acid polypeptide reads, in one-letter code: Putative protein PTGES3L (166 aa).

The 109-residue stretch at 46 to 154 (RQHARTLWYD…RPPPAMDDLD (109 aa)) folds into the CS domain. The segment at 142–166 (STKRPPPAMDDLDDDSDSADDATSN) is disordered. The span at 151–166 (DDLDDDSDSADDATSN) shows a compositional bias: acidic residues.

It belongs to the p23/wos2 family.

The chain is Putative protein PTGES3L from Homo sapiens (Human).